Here is a 325-residue protein sequence, read N- to C-terminus: HPr kinase/phosphorylase (325 aa).

Catalysis depends on residues His-152 and Lys-173. 167–174 (GESGLGKS) contacts ATP. Ser-174 is a Mg(2+) binding site. The Proton acceptor; for phosphorylation activity. Proton donor; for dephosphorylation activity role is filled by Asp-191. The important for the catalytic mechanism of both phosphorylation and dephosphorylation stretch occupies residues 215–224 (LEVRGIGLLD). Glu-216 contacts Mg(2+). Arg-258 is an active-site residue. Residues 279–284 (AVDAGR) are important for the catalytic mechanism of dephosphorylation.

The protein belongs to the HPrK/P family. As to quaternary structure, homohexamer. It depends on Mg(2+) as a cofactor.

The catalysed reaction is [HPr protein]-L-serine + ATP = [HPr protein]-O-phospho-L-serine + ADP + H(+). It catalyses the reaction [HPr protein]-O-phospho-L-serine + phosphate + H(+) = [HPr protein]-L-serine + diphosphate. Functionally, catalyzes the ATP- as well as the pyrophosphate-dependent phosphorylation of a specific serine residue in HPr, a phosphocarrier protein of the phosphoenolpyruvate-dependent sugar phosphotransferase system (PTS). HprK/P also catalyzes the pyrophosphate-producing, inorganic phosphate-dependent dephosphorylation (phosphorolysis) of seryl-phosphorylated HPr (P-Ser-HPr). The chain is HPr kinase/phosphorylase from Leptothrix cholodnii (strain ATCC 51168 / LMG 8142 / SP-6) (Leptothrix discophora (strain SP-6)).